The chain runs to 229 residues: PKHD-type hydroxylase BRADO4652 (229 aa).

In terms of domain architecture, Fe2OG dioxygenase spans 78–180 (QIFPPLFNRY…RVASFFWMQS (103 aa)). Fe cation contacts are provided by histidine 98, aspartate 100, and histidine 161. Arginine 171 contacts 2-oxoglutarate.

The cofactor is Fe(2+). Requires L-ascorbate as cofactor.

This Bradyrhizobium sp. (strain ORS 278) protein is PKHD-type hydroxylase BRADO4652.